The following is a 435-amino-acid chain: Mitochondrial association factor 1 form a1 (435 aa).

The N-terminal stretch at 1-20 (MWRIWRCRLSFLFATGCLLG) is a signal peptide. Over 21–95 (ALTAGLGSQM…SVTARRRRNR (75 aa)) the chain is Vacuolar. The disordered stretch occupies residues 43 to 88 (GVADASQEAGDVVEERTERTEEQVFAPGPPRRHSSESLFPRNASVT). Residues 55 to 64 (VEERTERTEE) are compositionally biased toward basic and acidic residues. The helical transmembrane segment at 96–116 (RIAPIATAVGVAVILAALYVL) threads the bilayer. At 117-435 (RRRRAQPPQE…ERKYKFPQGD (319 aa)) the chain is on the cytoplasmic side. The segment at 120–162 (RAQPPQEPEPPTRLRTPRPRAPSEQQQPSESEPPAEVPMTPDP) is disordered. The segment covering 141-153 (PSEQQQPSESEPP) has biased composition (low complexity).

In terms of assembly, interacts with host SAMM50.

The protein resides in the parasitophorous vacuole membrane. During host cell infection by tachyzoites, does not play a role in tethering the parasitophorous vacuole to the host mitochondria, probably because it does not bind host mitochondrial import protein TOMM70. In Toxoplasma gondii, this protein is Mitochondrial association factor 1 form a1.